The chain runs to 135 residues: Large ribosomal subunit protein uL16 (135 aa).

It belongs to the universal ribosomal protein uL16 family. Part of the 50S ribosomal subunit.

Its function is as follows. Binds 23S rRNA and is also seen to make contacts with the A and possibly P site tRNAs. The protein is Large ribosomal subunit protein uL16 of Desulforapulum autotrophicum (strain ATCC 43914 / DSM 3382 / VKM B-1955 / HRM2) (Desulfobacterium autotrophicum).